The sequence spans 106 residues: Tripartite terminase subunit 2 (106 aa).

Belongs to the herpesviridae TRM2 protein family. In terms of assembly, associates with TRM1 and TRM3 to form the tripartite terminase complex.

The protein resides in the host nucleus. In terms of biological role, component of the molecular motor that translocates viral genomic DNA in empty capsid during DNA packaging. Forms a tripartite terminase complex together with TRM1 and TRM3 in the host cytoplasm. Once the complex reaches the host nucleus, it interacts with the capsid portal vertex. This portal forms a ring in which genomic DNA is translocated into the capsid. This is Tripartite terminase subunit 2 from Homo sapiens (Human).